The sequence spans 239 residues: ATP-dependent dethiobiotin synthetase BioD (239 aa).

Residue 15–20 coordinates ATP; sequence EIGKTF. Thr19 is a Mg(2+) binding site. Lys40 is a catalytic residue. ATP contacts are provided by residues Asp57, 118–121, 178–179, and 211–213; these read EGVG, NH, and AHL. Asp57 and Glu118 together coordinate Mg(2+).

It belongs to the dethiobiotin synthetase family. In terms of assembly, homodimer. The cofactor is Mg(2+).

The protein localises to the cytoplasm. It catalyses the reaction (7R,8S)-7,8-diammoniononanoate + CO2 + ATP = (4R,5S)-dethiobiotin + ADP + phosphate + 3 H(+). Its pathway is cofactor biosynthesis; biotin biosynthesis; biotin from 7,8-diaminononanoate: step 1/2. Its function is as follows. Catalyzes a mechanistically unusual reaction, the ATP-dependent insertion of CO2 between the N7 and N8 nitrogen atoms of 7,8-diaminopelargonic acid (DAPA, also called 7,8-diammoniononanoate) to form a ureido ring. The sequence is that of ATP-dependent dethiobiotin synthetase BioD from Burkholderia ambifaria (strain MC40-6).